The chain runs to 575 residues: Bifunctional decalin synthase calF (575 aa).

The N-terminal stretch at 1–18 (MSFKPLLLSLSLLSPALG) is a signal peptide. N-linked (GlcNAc...) asparagine glycans are attached at residues asparagine 46, asparagine 103, asparagine 127, asparagine 175, asparagine 268, asparagine 308, asparagine 359, asparagine 425, and asparagine 485. Residues 118–297 (LGNYASYSIN…LSMTTKVFQD (180 aa)) form the FAD-binding PCMH-type domain.

It belongs to the oxygen-dependent FAD-linked oxidoreductase family.

It functions in the pathway secondary metabolite biosynthesis. Functionally, bifunctional decaline synthase; part of the gene cluster that mediates the biosynthesis of calbistrin A and related compounds. Calbistrin A is a secondary metabolite with an interesting structure that was recently found to have bioactivity against leukemia cells. It consists of two polyketides linked by an ester bond: a bicyclic decalin containing polyketide and a linear 12 carbon dioic acid structure. The polyketide synthase calA is probably responsible for forming the decalin moiety. Because calA lacks a designated enoylreductase (ER) domain, the required activity is provided by the trans-enoyl reductase calK. Following release from the PKS, calF then probably catalyzes the oxidation and the subsequent Diels Alder cycloisomerization that lead to the formation of the decalin moiety. The decalin polyketide backbone includes two C-methyl groups, at C7 and C11 in backbone, of which the C7 position is probably methylated by the methyltransferase domain of calA. A candidate for adding the methyl group at C11, if not done by CalA, is the cluster methyltransferase calH. Several additional tailoring enzymes within the cluster could be involved in the modification of the decalin polyketide product. Those include the 3 cytochrome P450 monooxygenases CalE, CalG and CalL, of which one might be responsible for the introduction of the extra hydroxyl group attached to the backbone of the decalin moiety, at position C9 in the backbone, that allows for attachment of the linear moiety. One tailoring enzyme activity that is expected to be involved in biosynthesis of calbistrin is an acyltransferase for connecting the two polyketide synthase products, and which could be performed by the cluster acyltransferase calJ. The enzyme responsible for the biosynthesis of the linear moiety, probably a second PKS, has not been identified yet. The polypeptide is Bifunctional decalin synthase calF (Penicillium decumbens).